The primary structure comprises 126 residues: Large ribosomal subunit protein bL12 (126 aa).

Belongs to the bacterial ribosomal protein bL12 family. Homodimer. Part of the ribosomal stalk of the 50S ribosomal subunit. Forms a multimeric L10(L12)X complex, where L10 forms an elongated spine to which 2 to 4 L12 dimers bind in a sequential fashion. Binds GTP-bound translation factors.

Its function is as follows. Forms part of the ribosomal stalk which helps the ribosome interact with GTP-bound translation factors. Is thus essential for accurate translation. In Helicobacter hepaticus (strain ATCC 51449 / 3B1), this protein is Large ribosomal subunit protein bL12.